The primary structure comprises 902 residues: U3 small nucleolar RNA-associated protein 21 homolog (902 aa).

14 WD repeats span residues 40-71, 80-110, 119-154, 164-198, 206-243, 249-284, 289-332, 339-373, 399-438, 447-481, 492-528, 533-568, 570-611, and 613-651; these read DIEARGTHFLVTTSVGNTFQTYDCEKLNLLFV, TCLKSFKDFMLVAAGSKIFAYKRGKIIWDID, THLDAFGEWIIACTSSRHVYVWKHASKYSVPELHTT, TSLLHPSTYLNKILLGFSDGALQIWNLRVSKRVHE, GITSLTQAPVLDVLAVGTISGRIVIFNLKNGSILMEFK, LSCSFRTDGTPILASSNPIGDLSFWDLSKRRIQNVT, FGSL…RSRN, SFVKFYGKSVHFLISAATDRSLRAVSLYQDSQSTE, TALSSSNTREKYWDNVLTAHKNDSSARTWNWKSKTLGQHV, VRSVCVSCCGNFGLIGSSKGVVDVYNMQSGIKRKS, VTAVMLDNVNRILVTASLDGILKFWDFNKGNLIDSLD, ITHAIYQHSSDLVAVACDDFGIRIVDVQTRKIVREL, GHSN…DSIS, and PSVCTSLTFAPTGDYLATTHVDQVGISLWTNLSMFKHVS.

As to quaternary structure, interacts with snoRNA U3. Interacts with MPP10. Component of the ribosomal small subunit (SSU) processome composed of at least 40 protein subunits and snoRNA U3.

The protein resides in the nucleus. It localises to the nucleolus. Its function is as follows. Involved in nucleolar processing of pre-18S ribosomal RNA and ribosome assembly. This is U3 small nucleolar RNA-associated protein 21 homolog from Schizosaccharomyces pombe (strain 972 / ATCC 24843) (Fission yeast).